A 363-amino-acid chain; its full sequence is Pyrimidine monooxygenase RutA (363 aa).

Residues 49-50 (IK), N115, E124, 140-141 (RY), and S190 each bind FMN.

It belongs to the NtaA/SnaA/DszA monooxygenase family. RutA subfamily.

It catalyses the reaction uracil + FMNH2 + NADH + O2 = (Z)-3-ureidoacrylate + FMN + NAD(+) + H2O + H(+). The catalysed reaction is thymine + FMNH2 + NADH + O2 = (Z)-2-methylureidoacrylate + FMN + NAD(+) + H2O + H(+). Functionally, catalyzes the pyrimidine ring opening between N-3 and C-4 by an unusual flavin hydroperoxide-catalyzed mechanism, adding oxygen atoms in the process to yield ureidoacrylate peracid, that immediately reacts with FMN forming ureidoacrylate and FMN-N(5)-oxide. The FMN-N(5)-oxide reacts spontaneously with NADH to produce FMN. Requires the flavin reductase RutF to regenerate FMN in vivo. This is Pyrimidine monooxygenase RutA from Escherichia coli O157:H7 (strain EC4115 / EHEC).